Reading from the N-terminus, the 99-residue chain is Small ribosomal subunit protein bS20 (99 aa).

The protein belongs to the bacterial ribosomal protein bS20 family.

In terms of biological role, binds directly to 16S ribosomal RNA. This is Small ribosomal subunit protein bS20 from Thermotoga neapolitana (strain ATCC 49049 / DSM 4359 / NBRC 107923 / NS-E).